The sequence spans 455 residues: Beta-1,4-mannosyltransferase bre-3 (455 aa).

This sequence belongs to the glycosyltransferase 2 family.

Its subcellular location is the cytoplasm. Its pathway is protein modification; protein glycosylation. In terms of biological role, glycosyltransferase with a proposed role in glycosphingolipid biosynthesis. Involved in susceptibility to pore-forming crystal toxins in conjunction with bre-1, bre-2 and bre-4. Involved in resistance to the nematotoxic C.cinerea galectin Cgl2. Has a role in determining brood size. The protein is Beta-1,4-mannosyltransferase bre-3 of Caenorhabditis briggsae.